Consider the following 302-residue polypeptide: DDRGK domain-containing protein 1 (302 aa).

A helical transmembrane segment spans residues 1 to 21 (MDPLLLGSVGVLVLAVTLIIW). At 22 to 302 (RLLKLQWDEK…IRLETPSAAE (281 aa)) the chain is on the cytoplasmic side. Positions 101–178 (EYDEDGKKIG…EREEKERKEH (78 aa)) are disordered. The segment covering 118–178 (QAKEEKRQMR…EREEKERKEH (61 aa)) has biased composition (basic and acidic residues).

The protein belongs to the DDRGK1 family.

The protein localises to the endoplasmic reticulum membrane. Substrate adapter for ufmylation, the covalent attachment of the ubiquitin-like modifier ufm-1 to substrate proteins. The chain is DDRGK domain-containing protein 1 from Caenorhabditis elegans.